The chain runs to 248 residues: Sperm-specific protein Don juan (248 aa).

The stretch at 82-147 (KEGNQDELEN…EKKTKCAKKD (66 aa)) forms a coiled coil. Positions 146–200 (KDPCKKKDPCKKKDPCKKKDPCKKKDPCKKKDPCKKKDPCKKKDPCKKKGGDLKK) are disordered. Tandem repeats lie at residues 147 to 152 (DPCKKK), 153 to 158 (DPCKKK), 159 to 164 (DPCKKK), 165 to 170 (DPCKKK), 171 to 176 (DPCKKK), 177 to 182 (DPCKKK), 183 to 188 (DPCKKK), and 189 to 194 (DPCKKK). The interval 147–194 (DPCKKKDPCKKKDPCKKKDPCKKKDPCKKKDPCKKKDPCKKKDPCKKK) is 8 X 6 AA tandem repeat of D-P-C-K-K-K. Positions 197-244 (DLKKKCKKLAEKEKCKKLAKKEKMKKLQKKCKKMAQKEKCKKMAKKDK) form a coiled coil.

As to expression, expression limited to post-meiotic male germ cells. Expressed in elongated spermatids during individualization and in finally elongated nuclei of spermatids. After completion of nuclear shaping it is no longer expressed in the sperm heads with the onset of individualization.

Its subcellular location is the nucleus. The protein localises to the mitochondrion. In terms of biological role, may be involved in the final steps of mitochondrial differentiation within the flagellum. This is Sperm-specific protein Don juan (dj) from Drosophila melanogaster (Fruit fly).